A 318-amino-acid chain; its full sequence is Ubiquitin-like domain-containing CTD phosphatase 1 (318 aa).

An N-acetylalanine modification is found at Ala2. Positions 3-81 (LPIIVKWGGQ…IMMMGTREES (79 aa)) constitute a Ubiquitin-like domain. Lys117 bears the N6-acetyllysine mark. Residues 133 to 294 (PREGKKLLVL…LKLTQYLKEI (162 aa)) form the FCP1 homology domain. Asp143, Asp145, and Asp253 together coordinate Mg(2+).

Mg(2+) serves as cofactor.

Its subcellular location is the nucleus. The enzyme catalyses O-phospho-L-seryl-[protein] + H2O = L-seryl-[protein] + phosphate. It carries out the reaction O-phospho-L-threonyl-[protein] + H2O = L-threonyl-[protein] + phosphate. In terms of biological role, dephosphorylates 26S nuclear proteasomes, thereby decreasing their proteolytic activity. Recruited to the 19S regulatory particle of the 26S proteasome through its interaction with 19S component PSMD2/RPN1. Once recruited, dephosphorylates 19S component PSMC2/RPT1 which impairs PSMC2 ATPase activity and disrupts 26S proteasome assembly. Has also been reported to stimulate the proteolytic activity of the 26S proteasome. The polypeptide is Ubiquitin-like domain-containing CTD phosphatase 1 (UBLCP1) (Bos taurus (Bovine)).